The chain runs to 101 residues: Protein translation factor SUI1 homolog (101 aa).

This sequence belongs to the SUI1 family.

The protein is Protein translation factor SUI1 homolog of Aeropyrum pernix (strain ATCC 700893 / DSM 11879 / JCM 9820 / NBRC 100138 / K1).